The primary structure comprises 484 residues: Adenylosuccinate lyase (484 aa).

Alanine 2 is subject to N-acetylalanine. Substrate contacts are provided by residues 20-21 (RY), 85-87 (RHD), and 111-112 (TS). Lysine 147 is subject to N6-acetyllysine. Histidine 159 serves as the catalytic Proton donor/acceptor. A substrate-binding site is contributed by glutamine 241. Catalysis depends on serine 289, which acts as the Proton donor/acceptor. Lysine 295 bears the N6-acetyllysine mark. Positions 303, 329, 334, and 338 each coordinate substrate. A Glycyl lysine isopeptide (Lys-Gly) (interchain with G-Cter in SUMO1) cross-link involves residue lysine 415.

Belongs to the lyase 1 family. Adenylosuccinate lyase subfamily. Homotetramer. Residues from neighboring subunits contribute catalytic and substrate-binding residues to each active site.

The enzyme catalyses N(6)-(1,2-dicarboxyethyl)-AMP = fumarate + AMP. It catalyses the reaction (2S)-2-[5-amino-1-(5-phospho-beta-D-ribosyl)imidazole-4-carboxamido]succinate = 5-amino-1-(5-phospho-beta-D-ribosyl)imidazole-4-carboxamide + fumarate. It participates in purine metabolism; AMP biosynthesis via de novo pathway; AMP from IMP: step 2/2. It functions in the pathway purine metabolism; IMP biosynthesis via de novo pathway; 5-amino-1-(5-phospho-D-ribosyl)imidazole-4-carboxamide from 5-amino-1-(5-phospho-D-ribosyl)imidazole-4-carboxylate: step 2/2. In terms of biological role, catalyzes two non-sequential steps in de novo AMP synthesis: converts (S)-2-(5-amino-1-(5-phospho-D-ribosyl)imidazole-4-carboxamido)succinate (SAICAR) to fumarate plus 5-amino-1-(5-phospho-D-ribosyl)imidazole-4-carboxamide, and thereby also contributes to de novo IMP synthesis, and converts succinyladenosine monophosphate (SAMP) to AMP and fumarate. This chain is Adenylosuccinate lyase (Adsl), found in Mus musculus (Mouse).